The chain runs to 166 residues: Cytochrome P450 regulator dap1 (166 aa).

The chain crosses the membrane as a helical span at residues 4 to 21 (TQVVFIVTLFLYLLITRW). One can recognise a Cytochrome b5 heme-binding domain in the interval 42-145 (DYTPAELKEY…QKYQAVGRLI (104 aa)). A Phosphoserine modification is found at Ser-108. Tyr-138 serves as a coordination point for heme.

The protein belongs to the cytochrome b5 family. MAPR subfamily. As to quaternary structure, interacts with erg5 and erg11.

It localises to the endoplasmic reticulum. The protein resides in the membrane. In terms of biological role, required for sterol biosynthesis. Functions as a positive regulator of cytochrome P450 enzymes erg5 and erg11. Function requires bound heme. The chain is Cytochrome P450 regulator dap1 (dap1) from Schizosaccharomyces pombe (strain 972 / ATCC 24843) (Fission yeast).